The sequence spans 502 residues: Glycerol kinase (502 aa).

Thr-14 provides a ligand contact to ADP. Positions 14, 15, and 16 each coordinate ATP. Sn-glycerol 3-phosphate is bound at residue Thr-14. Arg-18 lines the ADP pocket. The sn-glycerol 3-phosphate site is built by Arg-84, Glu-85, Tyr-137, and Asp-247. Glycerol is bound by residues Arg-84, Glu-85, Tyr-137, Asp-247, and Gln-248. Positions 269 and 312 each coordinate ADP. Positions 269, 312, 316, and 413 each coordinate ATP. Gly-413 and Asn-417 together coordinate ADP.

The protein belongs to the FGGY kinase family. As to quaternary structure, homotetramer and homodimer (in equilibrium). Heterodimer with EIIA-Glc. Binds 1 zinc ion per glycerol kinase EIIA-Glc dimer. The zinc ion is important for dimerization.

It catalyses the reaction glycerol + ATP = sn-glycerol 3-phosphate + ADP + H(+). It participates in polyol metabolism; glycerol degradation via glycerol kinase pathway; sn-glycerol 3-phosphate from glycerol: step 1/1. With respect to regulation, activity of this regulatory enzyme is affected by several metabolites. Allosterically and non-competitively inhibited by fructose 1,6-bisphosphate (FBP) and unphosphorylated phosphocarrier protein EIIA-Glc (III-Glc), an integral component of the bacterial phosphotransferase (PTS) system. Functionally, key enzyme in the regulation of glycerol uptake and metabolism. Catalyzes the phosphorylation of glycerol to yield sn-glycerol 3-phosphate. In Photorhabdus laumondii subsp. laumondii (strain DSM 15139 / CIP 105565 / TT01) (Photorhabdus luminescens subsp. laumondii), this protein is Glycerol kinase.